A 998-amino-acid chain; its full sequence is 2-imino-3-(indol-3-yl)propanoate dimerase (998 aa).

It carries out the reaction 2 H2O2 = O2 + 2 H2O. It catalyses the reaction 2 2-iminio-3-(indol-3-yl)propanoate + H2O2 = indole-3-pyruvate imine dimer + 2 H2O. It participates in pigment biosynthesis; violacein biosynthesis. In terms of biological role, catalyzes the hydrogen peroxide-dependent dimerization of two L-tryptophan-derived molecules (imine form of indole 3-pyruvate (IPA)), to form an uncharacterized product suggested to be indole-3-pyruvate imine dimer that can spontaneously convert into dichlorochromopyrrolate (CPA). The uncharacterized product is the substrate of VioE. The protein is 2-imino-3-(indol-3-yl)propanoate dimerase (vioB) of Chromobacterium violaceum (strain ATCC 12472 / DSM 30191 / JCM 1249 / CCUG 213 / NBRC 12614 / NCIMB 9131 / NCTC 9757 / MK).